A 95-amino-acid polypeptide reads, in one-letter code: Glutamyl-tRNA(Gln) amidotransferase subunit C (95 aa).

Belongs to the GatC family. In terms of assembly, heterotrimer of A, B and C subunits.

The catalysed reaction is L-glutamyl-tRNA(Gln) + L-glutamine + ATP + H2O = L-glutaminyl-tRNA(Gln) + L-glutamate + ADP + phosphate + H(+). It carries out the reaction L-aspartyl-tRNA(Asn) + L-glutamine + ATP + H2O = L-asparaginyl-tRNA(Asn) + L-glutamate + ADP + phosphate + 2 H(+). Its function is as follows. Allows the formation of correctly charged Asn-tRNA(Asn) or Gln-tRNA(Gln) through the transamidation of misacylated Asp-tRNA(Asn) or Glu-tRNA(Gln) in organisms which lack either or both of asparaginyl-tRNA or glutaminyl-tRNA synthetases. The reaction takes place in the presence of glutamine and ATP through an activated phospho-Asp-tRNA(Asn) or phospho-Glu-tRNA(Gln). This Moraxella catarrhalis (Branhamella catarrhalis) protein is Glutamyl-tRNA(Gln) amidotransferase subunit C.